Here is a 165-residue protein sequence, read N- to C-terminus: NADPH-dependent 7-cyano-7-deazaguanine reductase (165 aa).

The interval 1 to 24 (MTTRSTDQTEHLRALGQKTPYPAA) is disordered. The Thioimide intermediate role is filled by Cys-56. Asp-63 functions as the Proton donor in the catalytic mechanism. Substrate-binding positions include 78-80 (VES) and 97-98 (ME).

This sequence belongs to the GTP cyclohydrolase I family. QueF type 1 subfamily.

It is found in the cytoplasm. It carries out the reaction 7-aminomethyl-7-carbaguanine + 2 NADP(+) = 7-cyano-7-deazaguanine + 2 NADPH + 3 H(+). It functions in the pathway tRNA modification; tRNA-queuosine biosynthesis. Its function is as follows. Catalyzes the NADPH-dependent reduction of 7-cyano-7-deazaguanine (preQ0) to 7-aminomethyl-7-deazaguanine (preQ1). This is NADPH-dependent 7-cyano-7-deazaguanine reductase from Nitratidesulfovibrio vulgaris (strain ATCC 29579 / DSM 644 / CCUG 34227 / NCIMB 8303 / VKM B-1760 / Hildenborough) (Desulfovibrio vulgaris).